A 585-amino-acid chain; its full sequence is Lipoprotein LpqB (585 aa).

A signal peptide spans 1 to 17 (MGRKLLGLLMLAVLLAG). Cys18 carries the N-palmitoyl cysteine lipid modification. Cys18 carries S-diacylglycerol cysteine lipidation. 2 disordered regions span residues 24–48 (SSAP…TPGM) and 560–585 (PSAD…VLPG).

Belongs to the LpqB lipoprotein family.

Its subcellular location is the cell membrane. The protein is Lipoprotein LpqB of Mycolicibacterium paratuberculosis (strain ATCC BAA-968 / K-10) (Mycobacterium paratuberculosis).